A 215-amino-acid chain; its full sequence is Recombination protein RecR (215 aa).

A C4-type zinc finger spans residues 74 to 89 (CQRCGHLSADPICDIC). The 95-residue stretch at 97–191 (GVICVVADSR…RVTRIAYGLP (95 aa)) folds into the Toprim domain.

Belongs to the RecR family.

Its function is as follows. May play a role in DNA repair. It seems to be involved in an RecBC-independent recombinational process of DNA repair. It may act with RecF and RecO. The polypeptide is Recombination protein RecR (Synechococcus sp. (strain RCC307)).